The sequence spans 522 residues: Gypsy retrotransposon integrase-like protein 1 (522 aa).

The 158-residue stretch at 135–292 (KVENPWSLVT…TPYFQMFSRN (158 aa)) folds into the Integrase catalytic domain. Ser-502 bears the Phosphoserine mark.

As to expression, widely expressed. Also found in tumors originating from parathyroid gland, colon, stomach, bladder, uterus and prostate.

The sequence is that of Gypsy retrotransposon integrase-like protein 1 (GIN1) from Homo sapiens (Human).